The sequence spans 494 residues: Putative myristoylated protein 006R (494 aa).

A lipid anchor (N-myristoyl glycine; by host) is attached at glycine 2. Helical transmembrane passes span valine 193 to alanine 213, valine 214 to tryptophan 234, and tryptophan 465 to phenylalanine 485.

Belongs to the IIV-6 118L/458R family.

The protein resides in the membrane. The sequence is that of Putative myristoylated protein 006R from Aedes vexans (Inland floodwater mosquito).